A 785-amino-acid polypeptide reads, in one-letter code: Cadherin-7 (785 aa).

A signal peptide spans 1–27 (MKLGKVEFCHLLQIIALFLCLSGMNQA). Residues 28 to 47 (EPSRSRSKPYFQSGRTRTKR) constitute a propeptide that is removed on maturation. The Extracellular segment spans residues 48–607 (SWVWNQFFVL…AYILPAGLST (560 aa)). Cadherin domains lie at 49–153 (WVWN…EPKF), 154–262 (LDGP…PPRF), 263–377 (PRRS…PPVF), 378–482 (TSRL…APEF), and 482–599 (FAME…AEAY). N-linked (GlcNAc...) asparagine glycosylation is found at Asn449 and Asn530. The chain crosses the membrane as a helical span at residues 608 to 628 (GALIAILACVLTLLVLVLLIV). The Cytoplasmic segment spans residues 629–785 (TMRRRKKEPL…YGSGPDCLYS (157 aa)).

The protein resides in the cell membrane. Cadherins are calcium-dependent cell adhesion proteins. They preferentially interact with themselves in a homophilic manner in connecting cells; cadherins may thus contribute to the sorting of heterogeneous cell types. The polypeptide is Cadherin-7 (CDH7) (Gallus gallus (Chicken)).